Reading from the N-terminus, the 322-residue chain is 4-hydroxythreonine-4-phosphate dehydrogenase (322 aa).

Residues His126 and Thr127 each coordinate substrate. 3 residues coordinate a divalent metal cation: His160, His205, and His260. Positions 268, 277, and 286 each coordinate substrate.

It belongs to the PdxA family. As to quaternary structure, homodimer. Zn(2+) is required as a cofactor. Requires Mg(2+) as cofactor. It depends on Co(2+) as a cofactor.

The protein resides in the cytoplasm. It catalyses the reaction 4-(phosphooxy)-L-threonine + NAD(+) = 3-amino-2-oxopropyl phosphate + CO2 + NADH. The protein operates within cofactor biosynthesis; pyridoxine 5'-phosphate biosynthesis; pyridoxine 5'-phosphate from D-erythrose 4-phosphate: step 4/5. In terms of biological role, catalyzes the NAD(P)-dependent oxidation of 4-(phosphooxy)-L-threonine (HTP) into 2-amino-3-oxo-4-(phosphooxy)butyric acid which spontaneously decarboxylates to form 3-amino-2-oxopropyl phosphate (AHAP). The sequence is that of 4-hydroxythreonine-4-phosphate dehydrogenase from Paracoccus denitrificans (strain Pd 1222).